A 236-amino-acid chain; its full sequence is V-set and transmembrane domain-containing protein 2A (236 aa).

Residues 1–24 form the signal peptide; that stretch reads MMGIFLVYVGFVFFSVLYVQQGLS. Residues 27-143 form the Ig-like V-type domain; the sequence is AKFTEFPRNV…YGELQEHKAQ (117 aa). Asparagine 35 carries N-linked (GlcNAc...) asparagine glycosylation. Cysteine 48 and cysteine 127 are oxidised to a cystine. N-linked (GlcNAc...) asparagine glycosylation is present at asparagine 175. Residues 184-199 show a composition bias toward polar residues; sequence IHGSANQRTHSTSSPQ. A disordered region spans residues 184–206; that stretch reads IHGSANQRTHSTSSPQVVAKIPK.

As to quaternary structure, homodimer. In terms of processing, N-glycosylated. N-linked glycosylation is critical for secretion but not for preadipocyte cell differentiation activity.

It is found in the secreted. Plays a role in the regulation of the early stage of white and brown preadipocyte cell differentiation. Promotes adipogenic commitment of preadipocytes by increasing gene expression of the transcription factor PPARG in a BMP4-dependent signaling pathway. The polypeptide is V-set and transmembrane domain-containing protein 2A (Homo sapiens (Human)).